The primary structure comprises 807 residues: Glycerol-3-phosphate acyltransferase (807 aa).

The HXXXXD motif signature appears at cysteine 305–methionine 310.

This sequence belongs to the GPAT/DAPAT family.

Its subcellular location is the cell inner membrane. It carries out the reaction sn-glycerol 3-phosphate + an acyl-CoA = a 1-acyl-sn-glycero-3-phosphate + CoA. Its pathway is phospholipid metabolism; CDP-diacylglycerol biosynthesis; CDP-diacylglycerol from sn-glycerol 3-phosphate: step 1/3. This Escherichia coli O139:H28 (strain E24377A / ETEC) protein is Glycerol-3-phosphate acyltransferase.